A 327-amino-acid chain; its full sequence is CREB homolog crh-1 (327 aa).

Residues 16–75 (SPLMMLLFKALQEGGDSEDEARRRREQLNRRPSYRMILKDLETADKVMKKEPEETPPSSV) enclose the KID domain. 2 disordered regions span residues 27 to 114 (QEGG…SPYG) and 151 to 200 (KVFP…VQSL). Basic and acidic residues predominate over residues 35–44 (EARRRREQLN). Ser48 carries the post-translational modification Phosphoserine. Over residues 52–68 (ILKDLETADKVMKKEPE) the composition is skewed to basic and acidic residues. A compositionally biased stretch (polar residues) spans 71–84 (PPSSVDASPLQFQS). Residues 161–172 (GLGGGGGGGGVP) show a composition bias toward gly residues. Low complexity predominate over residues 173-199 (GPSSGIAGMSVQPPTSSTPSQQQSVQS). In terms of domain architecture, bZIP spans 266–317 (NRKRQVRLLKNREAAKECRRKKKEYVKCLENRVSVLENQNKALIEELKTLKE). The tract at residues 267–292 (RKRQVRLLKNREAAKECRRKKKEYVK) is basic motif. Residues 284–318 (RRKKKEYVKCLENRVSVLENQNKALIEELKTLKEL) adopt a coiled-coil conformation. Residues 294 to 315 (LENRVSVLENQNKALIEELKTL) are leucine-zipper.

This sequence belongs to the bZIP family. In terms of assembly, interacts with CREB-regulated transcription coactivator homolog crtc-1. Post-translationally, transcriptional activity is enhanced by phosphorylation. Phosphorylated by cmk-1. Expressed widely, including in head neurons AFD, gustatory neurons ASE, the olfactory neurons AWC, and in the ASI sensory neurons, as well as in the intestine and gonads in hermaphrodites.

It localises to the nucleus. In terms of biological role, transcription factor. Transcriptional activity probably positively regulated by phosphorylation. Modulates expression of target genes, acting by binding to regulatory cAMP response elements (CRE). Acts downstream of the calcium-triggered CaMKK-CaMK1 signaling cascade, consisting of the protein kinase kinase ckk-1 and the protein kinase cmk-1. Plays a role in learning and memory, feeding behavior, stress response, entry into the dauer stage and modulation of lifespan. Involved in commitment to the developmentally arrested larval state known as dauer, acting by positively regulating the expression of dauer-inhibiting TGF-beta-like daf-7 in the ASI neurons. Plays a role in both associative and non-associative long-term memory (LTM). Involved in modulating feeding behavior, acting by regulating transcription of tryptophan hydroxylase tph-1 in serotonergic ADF neurons. Regulates transcription of genes involved in endoplasmic reticulum (ER) stress. Involved in modulation of lifespan, in response to raised temperature, but independently of the heat-shock response pathway, acting by regulating transcription of FMRFamide-like neuropeptides flp-6 in the AFD neuron. Functionally, plays a role in associative long-term memory (LTM) and learning. Its function is as follows. Plays a role in associative long-term memory (LTM) and learning; perhaps required at the time of acquisition and/or the consolidation phase of memory formation. The protein is CREB homolog crh-1 of Caenorhabditis elegans.